The chain runs to 703 residues: MSKQSSCAIMGKSLSFSLSRGERADLEMPTDPLVLGVKRMMFDRETSTFLLISTVFLNINEKDSHLKILCCNCVSDLRTRINLPCVLIQCRKYNSEAFKYCILLLHNLNRVERLLSFELNHALDENTKIFDGPIVFWQYLNQFFYISSAIGKVTTISLMLSSIEWIGEIENFGLGFLGLAEPSEDKCTQKLSESDYEFSNSSLCAYALKSQEMLSNGYLIPLAYSTMVTHVHVWAAEMVDHQLRTSLIALTRKNQLILFQNGIPVRACQLPFPGPRSVQILDAGKRNRFFIVSFPSKACAVSEKKFKVVAKWEQLSLVLVNDFAGVGTEQVLVVFEDSLDADQLTSFTVTDFVKIWYSTKPLDCCEDPLAEEEHENYYLVLPALEGQLDNSFIFLNKIQQHISFKDKFIAKSWKALLNAVYGKGDSLPSDEMVKLDQDGLVPFCDEGEDSVPTPEENLPDNFPEPEHIVEQTWCHVLDDDLVVGAKVTSLKESNEMTLSLIMNQGNRSSFHLMKCHSQVWLLKHMKCERIQECTEIYLYKKLRNCGALFSWEQRTASEGILTIYCRSQGVLFQCLDHLIKVLPEICSFKYLKVENEDFLVDHLSSTLEAELVTFCSVSTSAFEYVRGGYNCRIRRTDNRAMTFLGRRAKIRQSKRKVQRERILKHLNMTVNGSSYAEMTLALAEIQLKSDLIVKTLANFVIAL.

In terms of assembly, belongs to the multisubunit FA complex composed of FANCA, FANCB, FANCC, FANCE, FANCF, FANCG, FANCL/PHF9 and FANCM.

The protein resides in the nucleus. DNA repair protein required for FANCD2 ubiquitination. The sequence is that of Fanconi anemia group B protein homolog (Fancb) from Mus musculus (Mouse).